A 527-amino-acid polypeptide reads, in one-letter code: GMP synthase [glutamine-hydrolyzing] (527 aa).

The Glutamine amidotransferase type-1 domain occupies 4–202; it reads KILILDFGSQ…VLQICGARAD (199 aa). Catalysis depends on Cys81, which acts as the Nucleophile. Active-site residues include His176 and Glu178. Residues 203-395 form the GMPS ATP-PPase domain; the sequence is WEMGNYIDEA…LGLPPAMVYR (193 aa). Residue 230–236 participates in ATP binding; that stretch reads SGGVDSS.

As to quaternary structure, homodimer.

It carries out the reaction XMP + L-glutamine + ATP + H2O = GMP + L-glutamate + AMP + diphosphate + 2 H(+). It functions in the pathway purine metabolism; GMP biosynthesis; GMP from XMP (L-Gln route): step 1/1. Functionally, catalyzes the synthesis of GMP from XMP. This Paraburkholderia phytofirmans (strain DSM 17436 / LMG 22146 / PsJN) (Burkholderia phytofirmans) protein is GMP synthase [glutamine-hydrolyzing].